A 688-amino-acid polypeptide reads, in one-letter code: Amino-acid acetyltransferase, mitochondrial (688 aa).

A mitochondrion-targeting transit peptide spans 1–45; the sequence is MSSRALTWPRTAKSSLLKQQTSSFVGQPKLGTPNCRSFSSTADRP. Disordered regions lie at residues 1–59 and 96–119; these read MSSR…SKSY and LKAQ…TVTQ. 3 stretches are compositionally biased toward polar residues: residues 12 to 25, 34 to 57, and 106 to 119; these read AKSS…SSFV, NCRS…SSSK, and TEPT…TVTQ. In terms of domain architecture, N-acetyltransferase spans 509–678; the sequence is NRPRLSLDDP…YEQVCRSIQP (170 aa).

This sequence belongs to the acetyltransferase family.

The protein localises to the mitochondrion. It catalyses the reaction L-glutamate + acetyl-CoA = N-acetyl-L-glutamate + CoA + H(+). It participates in amino-acid biosynthesis; L-arginine biosynthesis; N(2)-acetyl-L-ornithine from L-glutamate: step 1/4. Its function is as follows. N-acetylglutamate synthase involved in arginine biosynthesis. The protein is Amino-acid acetyltransferase, mitochondrial (arg2) of Aspergillus flavus (strain ATCC 200026 / FGSC A1120 / IAM 13836 / NRRL 3357 / JCM 12722 / SRRC 167).